Here is a 635-residue protein sequence, read N- to C-terminus: Chaperone protein DnaK (635 aa).

The residue at position 198 (Thr-198) is a Phosphothreonine; by autocatalysis. Positions Gln-606–Lys-635 are disordered. A compositionally biased stretch (acidic residues) spans Asp-622 to Lys-635.

This sequence belongs to the heat shock protein 70 family.

Acts as a chaperone. The polypeptide is Chaperone protein DnaK (Novosphingobium aromaticivorans (strain ATCC 700278 / DSM 12444 / CCUG 56034 / CIP 105152 / NBRC 16084 / F199)).